A 447-amino-acid polypeptide reads, in one-letter code: GTPase Der (447 aa).

EngA-type G domains follow at residues 4–165 and 180–357; these read QIIT…PEEE and LQIV…KIWN. Residues 10-17, 57-61, 119-122, 186-193, 233-237, and 298-301 contribute to the GTP site; these read GRPNVGKS, DTPGL, NKCE, GRPNAGKS, DTAGL, and NKWD. Residues 358–443 enclose the KH-like domain; sequence KKITTSKLNE…PIRFIYVKTK (86 aa).

Belongs to the TRAFAC class TrmE-Era-EngA-EngB-Septin-like GTPase superfamily. EngA (Der) GTPase family. Associates with the 50S ribosomal subunit.

Its function is as follows. GTPase that plays an essential role in the late steps of ribosome biogenesis. The chain is GTPase Der from Rickettsia africae (strain ESF-5).